An 88-amino-acid polypeptide reads, in one-letter code: MVPLCQVEVLYFAKSAEITGVRSETISVPQEIKALQLWKEIETRHPGLADVRNQIIFAVRQEYVELGDQLLVLQPGDEIAVIPPISGG.

Gly88 carries the 1-thioglycine; alternate modification. Gly88 is modified (glycyl adenylate; alternate).

This sequence belongs to the MoaD family. MOCS2A subfamily. As to quaternary structure, heterotetramer; composed of 2 small (MOCS2A) and 2 large (MOCS2B) subunits. C-terminal thiocarboxylation occurs in 2 steps, it is first acyl-adenylated (-COAMP) via the hesA/moeB/thiF part of MOCS3, then thiocarboxylated (-COSH) via the rhodanese domain of MOCS3. In terms of tissue distribution, widely expressed. Highest levels are found in heart and skeletal muscle. Lower levels are present in brain, kidney and pancreas. Very low levels are found in lung and peripheral blood leukocytes.

Its subcellular location is the cytoplasm. The protein localises to the cytosol. It participates in cofactor biosynthesis; molybdopterin biosynthesis. Functionally, acts as a sulfur carrier required for molybdopterin biosynthesis. Component of the molybdopterin synthase complex that catalyzes the conversion of precursor Z into molybdopterin by mediating the incorporation of 2 sulfur atoms into precursor Z to generate a dithiolene group. In the complex, serves as sulfur donor by being thiocarboxylated (-COSH) at its C-terminus by MOCS3. After interaction with MOCS2B, the sulfur is then transferred to precursor Z to form molybdopterin. The polypeptide is Molybdopterin synthase sulfur carrier subunit (Homo sapiens (Human)).